The chain runs to 953 residues: MDQTKPPRRNPLAFTPWPVTLITAVVYLAFVIPLLVIHHVVPSAPTSSPDGLNITEAWNDLQVLTAGYRPYNSRQNDKIHDWLLHRINEILGAAPPATTDEKKPDVFVFDDTRSNLTFARDNLAVYFEGTNILVYIRGEDDDQEQWWELPEGSPKGKGGVLVNAHYDSVSTGYGATDDGVGVVTCLQLVKYFTTPKNAPRKGLVVLFNNGEEDFLNGARVYSQHPLSRFPHTFLNLEGAGAGGRAVLFRSSDAEVAASYMRSKHPFGSVLGSDGFKAGLIRSQTDYVVFEGDMGLRGLDVAFLEPRARYHTDQDDTRHTSKDSLWHMLSTAVATTEDLVSDTSDRFDGPARNDHKIASGTGHQAVWFDLYGSTFVLFRLHTLFALSVTLLVVAPIVLLLTSIILTKVDKMYLFRTSIRPEGSLEVLPLYGDRGVIRYPFLLGIPTAVTIGLAYLLTKFNPYIVHSSQYAVWSMMVSVWIFLAWFVSRVADFARPSAFHRVYTLTWTFVVMWVLQVIATVYQDRWALGGSYFIFFAYAGTFLATWISYLELFALPRKSEYANHLRPVSRHASSHSSRRGLSEEDEEDEDEAPTESTSLLGSRQRTTFANYVRVNADTADLSDSEEHTQDVNVYGLEQRWSASLPKWLWLLQFLLAAPIVLILVGPIALLLTGSLHQTGQDGSSSLFIYIAIVALTTLLLSPMLPFVHRCTYHIPLFMLAVFAGTLIYNLVAFPFSDSNRLKLFFIQEVDLDTGLNTASLTGVQPFVHDVAVGLPSAAGQNVTCGPFGDRFKCSWTGIPPHVLTEDKPVEEWLSFEVSRSIDKPRHAQLQISGQNTRACKVVFDSPIKNFHVAGSAYDPRFPHTYAKGIKEIRLWSRVWDNTWTVDVEWFNPDSSSDHSKTSGSLTGQVVCLWSDYNQPGTIPALDEVRQYGPAWIGVSKLADGLVEGRKSFEIA.

The Cytoplasmic portion of the chain corresponds to Met-1–Pro-16. The chain crosses the membrane as a helical span at residues Trp-17 to Ile-37. Residues His-38 to Leu-382 are Vacuolar-facing. N-linked (GlcNAc...) asparagine glycosylation is found at Asn-53 and Asn-115. The Zn(2+) site is built by His-165 and Asp-177. Catalysis depends on Glu-211, which acts as the Proton acceptor. 3 residues coordinate Zn(2+): Glu-212, Glu-237, and His-310. Residues Phe-383–Ile-403 traverse the membrane as a helical segment. Residues Leu-404–Tyr-437 lie on the Cytoplasmic side of the membrane. The chain crosses the membrane as a helical span at residues Pro-438–Phe-458. The Vacuolar portion of the chain corresponds to Asn-459 to His-464. Residues Ser-465 to Val-485 form a helical membrane-spanning segment. The Cytoplasmic segment spans residues Ser-486–Arg-499. A helical transmembrane segment spans residues Val-500–Tyr-520. At Gln-521–Trp-524 the chain is on the vacuolar side. The chain crosses the membrane as a helical span at residues Ala-525 to Ile-545. Topologically, residues Ser-546 to Gln-650 are cytoplasmic. Residues Ala-570–Gly-599 form a disordered region. Positions Glu-581–Pro-591 are enriched in acidic residues. A helical membrane pass occupies residues Phe-651 to Gly-671. Residues Ser-672–Leu-684 lie on the Vacuolar side of the membrane. Residues Phe-685–Val-705 form a helical membrane-spanning segment. The Cytoplasmic segment spans residues His-706 to His-711. The helical transmembrane segment at Ile-712–Pro-732 threads the bilayer. The Vacuolar portion of the chain corresponds to Phe-733–Ala-953. Asn-779 is a glycosylation site (N-linked (GlcNAc...) asparagine).

This sequence belongs to the peptidase M28 family. Requires Zn(2+) as cofactor.

Its subcellular location is the vacuole membrane. Functionally, may be involved in vacuolar sorting and osmoregulation. This is Vacuolar membrane protease from Emericella nidulans (strain FGSC A4 / ATCC 38163 / CBS 112.46 / NRRL 194 / M139) (Aspergillus nidulans).